Reading from the N-terminus, the 225-residue chain is Lipoprotein-releasing system ATP-binding protein LolD (225 aa).

The 221-residue stretch at leucine 5–aspartate 225 folds into the ABC transporter domain. Residue glycine 41–serine 48 participates in ATP binding.

Belongs to the ABC transporter superfamily. Lipoprotein translocase (TC 3.A.1.125) family. As to quaternary structure, the complex is composed of two ATP-binding proteins (LolD) and two transmembrane proteins (LolC and LolE).

The protein localises to the cell inner membrane. In terms of biological role, part of the ABC transporter complex LolCDE involved in the translocation of mature outer membrane-directed lipoproteins, from the inner membrane to the periplasmic chaperone, LolA. Responsible for the formation of the LolA-lipoprotein complex in an ATP-dependent manner. This Geobacter metallireducens (strain ATCC 53774 / DSM 7210 / GS-15) protein is Lipoprotein-releasing system ATP-binding protein LolD.